Here is a 129-residue protein sequence, read N- to C-terminus: Fluoride-specific ion channel FluC 1 (129 aa).

A run of 3 helical transmembrane segments spans residues 43–63 (ASLL…PAWV), 68–88 (VVSL…TFSY), and 100–120 (LLAA…AALG). 2 residues coordinate Na(+): Gly-78 and Ser-81.

It belongs to the fluoride channel Fluc/FEX (TC 1.A.43) family.

It localises to the cell membrane. It catalyses the reaction fluoride(in) = fluoride(out). With respect to regulation, na(+) is not transported, but it plays an essential structural role and its presence is essential for fluoride channel function. Fluoride-specific ion channel. Important for reducing fluoride concentration in the cell, thus reducing its toxicity. The polypeptide is Fluoride-specific ion channel FluC 1 (Frankia casuarinae (strain DSM 45818 / CECT 9043 / HFP020203 / CcI3)).